The chain runs to 161 residues: Cyclic pyranopterin monophosphate synthase (161 aa).

Substrate is bound by residues 75-77 (MCH) and 115-116 (ME). Asp-130 is an active-site residue.

Belongs to the MoaC family. In terms of assembly, homohexamer; trimer of dimers.

The enzyme catalyses (8S)-3',8-cyclo-7,8-dihydroguanosine 5'-triphosphate = cyclic pyranopterin phosphate + diphosphate. It functions in the pathway cofactor biosynthesis; molybdopterin biosynthesis. Functionally, catalyzes the conversion of (8S)-3',8-cyclo-7,8-dihydroguanosine 5'-triphosphate to cyclic pyranopterin monophosphate (cPMP). In Bacillus thuringiensis subsp. konkukian (strain 97-27), this protein is Cyclic pyranopterin monophosphate synthase.